The sequence spans 1164 residues: DNA-directed RNA polymerase 132 kDa polypeptide (1164 aa).

This sequence belongs to the RNA polymerase beta chain family. In terms of assembly, the DNA-dependent RNA polymerase used for intermediate and late genes expression consists of eight subunits (147) kDa, (133) kDa, (35) kDa, (30) kDa, (22) kDa, (19) kDa, (18) kDa and (7) kDa totalling more than 500 kDa in mass. The same holoenzyme, with the addition of the transcription-specificity factor RAP94, is used for early gene expression.

Its subcellular location is the virion. The enzyme catalyses RNA(n) + a ribonucleoside 5'-triphosphate = RNA(n+1) + diphosphate. In terms of biological role, part of the DNA-dependent RNA polymerase which catalyzes the transcription of viral DNA into RNA using the four ribonucleoside triphosphates as substrates. Responsible for the transcription of early, intermediate and late genes. DNA-dependent RNA polymerase associates with the early transcription factor (ETF), itself composed of D6 and A7, thereby allowing the early genes transcription. Late transcription, and probably also intermediate transcription, require newly synthesized RNA polymerase. In Bos taurus (Bovine), this protein is DNA-directed RNA polymerase 132 kDa polypeptide (RPO132).